Consider the following 867-residue polypeptide: uncharacterized protein (867 aa).

The segment at residues 76–108 (CDFCRQKKIRCDMDQSPRPGNACINCRKHHLDC) is a DNA-binding region (zn(2)-C6 fungal-type). 2 disordered regions span residues 110–167 (FTRT…ITPV) and 217–257 (PQLA…NSNL). Polar residues-rich tracts occupy residues 137–167 (SAKSSSPAVNGSVFSGNEASPSSRAPSITPV) and 248–257 (SISSYTNSNL).

It is found in the nucleus. This is an uncharacterized protein from Schizosaccharomyces pombe (strain 972 / ATCC 24843) (Fission yeast).